The chain runs to 216 residues: N-acetyltransferase 9-like protein (216 aa).

Residues 68–215 (VLLNENDEAK…DHVELELMRT (148 aa)) form the N-acetyltransferase domain.

This sequence belongs to the acetyltransferase family. GNAT subfamily.

The protein localises to the cytoplasm. The protein resides in the nucleus. The protein is N-acetyltransferase 9-like protein of Schizosaccharomyces pombe (strain 972 / ATCC 24843) (Fission yeast).